A 104-amino-acid polypeptide reads, in one-letter code: Protein KleF (104 aa).

The polypeptide is Protein KleF (kleF) (Escherichia coli).